A 501-amino-acid polypeptide reads, in one-letter code: Phosphoethanolamine N-methyltransferase 1 (501 aa).

Gly72, Arg77, Asp93, Asp118, Val119, and Asn137 together coordinate S-adenosyl-L-homocysteine. 5 residues coordinate phosphocholine: Ser170, Thr175, Gly176, Arg180, and Tyr187. Residues 256-257 (QY) and Tyr265 each bind N-methylethanolamine phosphate. Tyr265 is a phosphocholine binding site. Val274, Ser275, Gly301, Asp323, Asp349, Cys350, and Arg366 together coordinate S-adenosyl-L-homocysteine. The phosphocholine site is built by Tyr397, Tyr411, Arg415, Tyr417, and Lys483. N-methylethanolamine phosphate contacts are provided by residues Tyr397, Tyr411, 415-417 (RGY), and Lys483.

The protein belongs to the class I-like SAM-binding methyltransferase superfamily. PEAMT family.

It catalyses the reaction phosphoethanolamine + S-adenosyl-L-methionine = N-methylethanolamine phosphate + S-adenosyl-L-homocysteine + H(+). The catalysed reaction is N-methylethanolamine phosphate + S-adenosyl-L-methionine = N,N-dimethylethanolamine phosphate + S-adenosyl-L-homocysteine + H(+). The enzyme catalyses N,N-dimethylethanolamine phosphate + S-adenosyl-L-methionine = phosphocholine + S-adenosyl-L-homocysteine + H(+). The protein operates within phospholipid metabolism; phosphatidylcholine biosynthesis; phosphocholine from phosphoethanolamine: step 1/1. Functionally, involved in phosphocholine biosynthesis. Catalyzes the N-methylation of phosphoethanolamine, phosphomonomethylethanolamine and phosphodimethylethanolamine, the three methylation steps required to convert phosphoethanolamine to phosphocholine (PC). May be involved in root development. This chain is Phosphoethanolamine N-methyltransferase 1, found in Zea mays (Maize).